Here is a 199-residue protein sequence, read N- to C-terminus: Glycerol-3-phosphate acyltransferase (199 aa).

The next 5 helical transmembrane spans lie at 5–25 (VLTIVIIVGAYLAGSVSSAVL), 56–76 (SAALVLFCDMLKGAAPAYLAF), 83–103 (IALGVIAIAACLGHIFPIFFG), 118–138 (APIGHDLALCLLASWIVLVLV), and 141–161 (YSSFAAICTALLAPVYTWWLD).

Belongs to the PlsY family. In terms of assembly, probably interacts with PlsX.

It localises to the cell inner membrane. It catalyses the reaction an acyl phosphate + sn-glycerol 3-phosphate = a 1-acyl-sn-glycero-3-phosphate + phosphate. The protein operates within lipid metabolism; phospholipid metabolism. Functionally, catalyzes the transfer of an acyl group from acyl-phosphate (acyl-PO(4)) to glycerol-3-phosphate (G3P) to form lysophosphatidic acid (LPA). This enzyme utilizes acyl-phosphate as fatty acyl donor, but not acyl-CoA or acyl-ACP. This is Glycerol-3-phosphate acyltransferase from Shewanella halifaxensis (strain HAW-EB4).